Here is a 219-residue protein sequence, read N- to C-terminus: Probable octanoyltransferase (219 aa).

In terms of domain architecture, BPL/LPL catalytic spans 43–219 (QPPKPTIITS…NNLDSFLMSK (177 aa)). Substrate contacts are provided by residues 83–90 (RGGQTTFH), 151–153 (AIG), and 164–166 (GLA). Catalysis depends on cysteine 182, which acts as the Acyl-thioester intermediate.

The protein belongs to the LipB family.

The enzyme catalyses octanoyl-[ACP] + L-lysyl-[protein] = N(6)-octanoyl-L-lysyl-[protein] + holo-[ACP] + H(+). Its pathway is protein modification; protein lipoylation via endogenous pathway; protein N(6)-(lipoyl)lysine from octanoyl-[acyl-carrier-protein]: step 1/2. Its function is as follows. Catalyzes the transfer of endogenously produced octanoic acid from octanoyl-acyl-carrier-protein onto the lipoyl domains of lipoate-dependent enzymes. Lipoyl-ACP can also act as a substrate although octanoyl-ACP is likely to be the physiological substrate. This Schizosaccharomyces pombe (strain 972 / ATCC 24843) (Fission yeast) protein is Probable octanoyltransferase.